The primary structure comprises 452 residues: Keratin, type II cytoskeletal 80 (452 aa).

The tract at residues 1 to 82 is head; that stretch reads MAYRSCVVGF…DPAVQQQKNQ (82 aa). The residue at position 45 (serine 45) is a Phosphoserine. Positions 82–118 are coil 1A; sequence QEKEEMKVLNDKFASLIGKVQALEQRNQLLETRWGFL. The region spanning 83 to 394 is the IF rod domain; the sequence is EKEEMKVLND…KLMEGEESRM (312 aa). A linker 1 region spans residues 119-135; the sequence is QGQGSATFDLSHHYETF. Positions 136–227 are coil 1B; the sequence is QGRLQEELRK…TVYEQELKDL (92 aa). The segment at 228–251 is linker 12; sequence TAQVKDVSVTVGLDSRCHIDLSGI. Residues 252–390 are coil 2; that stretch reads VEEVKAQYDA…ATYHKLMEGE (139 aa). The tract at residues 391-452 is tail; the sequence is ESRMDLPSTT…YLSQESEASE (62 aa). 2 stretches are compositionally biased toward polar residues: residues 411–421 and 443–452; these read TTASKSGLSKT and YLSQESEASE. Residues 411–452 are disordered; sequence TTASKSGLSKTPSRKKKNRGGPVIKITEMSEKYLSQESEASE.

It belongs to the intermediate filament family. Heterotetramer of two type I and two type II keratins.

This is Keratin, type II cytoskeletal 80 (Krt80) from Rattus norvegicus (Rat).